We begin with the raw amino-acid sequence, 138 residues long: Small ribosomal subunit protein uS11c (138 aa).

Residues 1-24 (MAKSPPRSGSRRPGRIGSRKSGRR) are disordered. Residues 9–24 (GSRRPGRIGSRKSGRR) show a composition bias toward basic residues.

Belongs to the universal ribosomal protein uS11 family. Part of the 30S ribosomal subunit.

It localises to the plastid. It is found in the chloroplast. The chain is Small ribosomal subunit protein uS11c from Citrus sinensis (Sweet orange).